A 20-amino-acid polypeptide reads, in one-letter code: MKKCAFVSDFDGTISKQDFY.

As to quaternary structure, monomer. The cofactor is Mg(2+). Mn(2+) is required as a cofactor.

The protein resides in the cytoplasm. It functions in the pathway polyol metabolism; glycerol biosynthesis. This is D-alpha-glycerophosphatase from Bacillus licheniformis.